A 256-amino-acid chain; its full sequence is Signal peptidase I (256 aa).

Residues Ser-32 and Lys-75 contribute to the active site.

Belongs to the peptidase S26 family.

It carries out the reaction Cleavage of hydrophobic, N-terminal signal or leader sequences from secreted and periplasmic proteins.. The protein is Signal peptidase I (lepB) of Aquifex aeolicus (strain VF5).